Here is a 145-residue protein sequence, read N- to C-terminus: Probable inactive ribonuclease-like protein 12 (145 aa).

A signal peptide spans 1–19 (MILMVIVFLLLLFWENELT). An N-linked (GlcNAc...) asparagine glycan is attached at Asn88.

This sequence belongs to the pancreatic ribonuclease family.

It is found in the secreted. Its function is as follows. Does not exhibit any ribonuclease activity. The chain is Probable inactive ribonuclease-like protein 12 (Rnase12) from Rattus norvegicus (Rat).